Reading from the N-terminus, the 187-residue chain is Acireductone dioxygenase (187 aa).

The Fe(2+) site is built by His90, His92, Glu96, and His135. His90, His92, Glu96, and His135 together coordinate Ni(2+).

Belongs to the acireductone dioxygenase (ARD) family. Requires Fe(2+) as cofactor. The cofactor is Ni(2+).

It localises to the cytoplasm. It is found in the nucleus. It catalyses the reaction 1,2-dihydroxy-5-(methylsulfanyl)pent-1-en-3-one + O2 = 4-methylsulfanyl-2-oxobutanoate + formate + 2 H(+). The catalysed reaction is 1,2-dihydroxy-5-(methylsulfanyl)pent-1-en-3-one + O2 = 3-(methylsulfanyl)propanoate + CO + formate + 2 H(+). It participates in amino-acid biosynthesis; L-methionine biosynthesis via salvage pathway; L-methionine from S-methyl-5-thio-alpha-D-ribose 1-phosphate: step 5/6. Functionally, catalyzes 2 different reactions between oxygen and the acireductone 1,2-dihydroxy-3-keto-5-methylthiopentene (DHK-MTPene) depending upon the metal bound in the active site. Fe-containing acireductone dioxygenase (Fe-ARD) produces formate and 2-keto-4-methylthiobutyrate (KMTB), the alpha-ketoacid precursor of methionine in the methionine recycle pathway. Ni-containing acireductone dioxygenase (Ni-ARD) produces methylthiopropionate, carbon monoxide and formate, and does not lie on the methionine recycle pathway. In Drosophila pseudoobscura pseudoobscura (Fruit fly), this protein is Acireductone dioxygenase.